A 1402-amino-acid chain; its full sequence is DNA-directed RNA polymerase subunit beta' (1402 aa).

Zn(2+)-binding residues include cysteine 71, cysteine 73, cysteine 86, and cysteine 89. Mg(2+) is bound by residues aspartate 462, aspartate 464, and aspartate 466. The Zn(2+) site is built by cysteine 811, cysteine 885, cysteine 892, and cysteine 895.

Belongs to the RNA polymerase beta' chain family. In terms of assembly, the RNAP catalytic core consists of 2 alpha, 1 beta, 1 beta' and 1 omega subunit. When a sigma factor is associated with the core the holoenzyme is formed, which can initiate transcription. Mg(2+) is required as a cofactor. It depends on Zn(2+) as a cofactor.

The enzyme catalyses RNA(n) + a ribonucleoside 5'-triphosphate = RNA(n+1) + diphosphate. In terms of biological role, DNA-dependent RNA polymerase catalyzes the transcription of DNA into RNA using the four ribonucleoside triphosphates as substrates. This chain is DNA-directed RNA polymerase subunit beta', found in Rhizobium etli (strain ATCC 51251 / DSM 11541 / JCM 21823 / NBRC 15573 / CFN 42).